Here is a 727-residue protein sequence, read N- to C-terminus: ADP-ribosylation factor-binding protein GGA3 (727 aa).

The VHS domain occupies 16-146; it reads ATNPSNRQED…MLKRQGIVQS (131 aa). Phosphoserine is present on residues Ser-159 and Ser-275. The GAT domain occupies 171–298; it reads DEEKSKLLAK…VINSYKTIIE (128 aa). The interval 299–597 is unstructured hinge; sequence GQIINGEVTT…VHVPLESIKP (299 aa). The tract at residues 334–385 is disordered; the sequence is TPSSSSPVLAPAPAPPTSGIPILPPPPQTSGPPRSRSSSQAEAPSGPDSTNN. The segment covering 343 to 363 has biased composition (pro residues); that stretch reads APAPAPPTSGIPILPPPPQTS. The segment covering 364 to 374 has biased composition (low complexity); sequence GPPRSRSSSQA. The DXXLL signature appears at 391-395; sequence DEELL. The segment at 400 to 419 is disordered; sequence SDPAPTAPKESAGNSPWHLF. In terms of domain architecture, GAE spans 598 to 719; sequence SSALPVTAYD…TELGEVDQFP (122 aa).

The protein belongs to the GGA protein family. As to quaternary structure, monomer. Interacts with GGA1 and GGA2. Binds to clathrin and activated ARFs, such as ARF1, ARF5 and ARF6. Binds RABEP1 and RABGEF1. Interacts with the membrane proteins M6PR/CD-MPR and IGF2R/CI-MPR and the accessory proteins SYNRG, EPN4, NECAP1, NECAP2 and AFTPH/aftiphilin. Interacts with TSG101 and UBC. Interacts with ADRA2B. Interacts with NTRK1; the interaction is independent of NTRK1 activation and ubiquitination. Interacts (via VHS domain) with BACE1 (via DXXLL motif). Post-translationally, phosphorylated by CK2 and dephosphorylated by PP2A. Phosphorylation of GGA3 allows the internal DXXLL motif to bind the VHS domain and to inhibit the recognition of cargo signals. Ubiquitinated. In terms of processing, proteolytically cleaved during apoptosis by CASP3.

It is found in the golgi apparatus. The protein resides in the trans-Golgi network membrane. The protein localises to the endosome membrane. Its subcellular location is the early endosome membrane. It localises to the recycling endosome membrane. Its function is as follows. Plays a role in protein sorting and trafficking between the trans-Golgi network (TGN) and endosomes. Mediates the ARF-dependent recruitment of clathrin to the TGN and binds ubiquitinated proteins and membrane cargo molecules with a cytosolic acidic cluster-dileucine (DXXLL) motif. Mediates export of the GPCR receptor ADRA2B to the cell surface. Involved in BACE1 transport and sorting as well as regulation of BACE1 protein levels. Regulates retrograde transport of BACE1 from endosomes to the trans-Golgi network via interaction through the VHS motif and dependent of BACE1 phosphorylation. Modulates BACE1 protein levels independently of the interaction between VHS domain and DXXLL motif through recognition of ubiquitination. Key player in a novel DXXLL-mediated endosomal sorting machinery to the recycling pathway that targets NTRK1 to the plasma membrane. This is ADP-ribosylation factor-binding protein GGA3 from Rattus norvegicus (Rat).